The sequence spans 632 residues: 1-deoxy-D-xylulose-5-phosphate synthase (632 aa).

Thiamine diphosphate contacts are provided by residues His79 and 120–122 (GHA). Mg(2+) is bound at residue Asp152. Residues 153 to 154 (GA), Asn181, Phe293, and Glu377 each bind thiamine diphosphate. Residue Asn181 participates in Mg(2+) binding.

This sequence belongs to the transketolase family. DXPS subfamily. In terms of assembly, homodimer. Requires Mg(2+) as cofactor. Thiamine diphosphate is required as a cofactor.

It catalyses the reaction D-glyceraldehyde 3-phosphate + pyruvate + H(+) = 1-deoxy-D-xylulose 5-phosphate + CO2. It participates in metabolic intermediate biosynthesis; 1-deoxy-D-xylulose 5-phosphate biosynthesis; 1-deoxy-D-xylulose 5-phosphate from D-glyceraldehyde 3-phosphate and pyruvate: step 1/1. In terms of biological role, catalyzes the acyloin condensation reaction between C atoms 2 and 3 of pyruvate and glyceraldehyde 3-phosphate to yield 1-deoxy-D-xylulose-5-phosphate (DXP). This Parabacteroides distasonis (strain ATCC 8503 / DSM 20701 / CIP 104284 / JCM 5825 / NCTC 11152) protein is 1-deoxy-D-xylulose-5-phosphate synthase.